A 325-amino-acid chain; its full sequence is DNA-directed RNA polymerase subunit alpha (325 aa).

Residues 1 to 231 (MQTSLLKPKI…DQLSVFAALE (231 aa)) are alpha N-terminal domain (alpha-NTD). The alpha C-terminal domain (alpha-CTD) stretch occupies residues 246 to 325 (IDPILLRPVD…ENWPPAGLDK (80 aa)).

This sequence belongs to the RNA polymerase alpha chain family. In terms of assembly, homodimer. The RNAP catalytic core consists of 2 alpha, 1 beta, 1 beta' and 1 omega subunit. When a sigma factor is associated with the core the holoenzyme is formed, which can initiate transcription.

It carries out the reaction RNA(n) + a ribonucleoside 5'-triphosphate = RNA(n+1) + diphosphate. Its function is as follows. DNA-dependent RNA polymerase catalyzes the transcription of DNA into RNA using the four ribonucleoside triphosphates as substrates. This Paraburkholderia phymatum (strain DSM 17167 / CIP 108236 / LMG 21445 / STM815) (Burkholderia phymatum) protein is DNA-directed RNA polymerase subunit alpha.